We begin with the raw amino-acid sequence, 98 residues long: NADH-ubiquinone oxidoreductase chain 4L (98 aa).

Transmembrane regions (helical) follow at residues 1–21 (MSMV…GLLM), 29–49 (SLLC…MTIL), and 61–81 (IILL…LVMV).

Belongs to the complex I subunit 4L family. Core subunit of respiratory chain NADH dehydrogenase (Complex I) which is composed of 45 different subunits.

It localises to the mitochondrion inner membrane. It catalyses the reaction a ubiquinone + NADH + 5 H(+)(in) = a ubiquinol + NAD(+) + 4 H(+)(out). In terms of biological role, core subunit of the mitochondrial membrane respiratory chain NADH dehydrogenase (Complex I) which catalyzes electron transfer from NADH through the respiratory chain, using ubiquinone as an electron acceptor. Part of the enzyme membrane arm which is embedded in the lipid bilayer and involved in proton translocation. In Arctocephalus australis (South American fur seal), this protein is NADH-ubiquinone oxidoreductase chain 4L (MT-ND4L).